A 458-amino-acid chain; its full sequence is Zinc finger protein 19 (458 aa).

In terms of domain architecture, KRAB spans 14–85; sequence VTFEDVAVHF…EAQDDPPAER (72 aa). 9 C2H2-type zinc fingers span residues 161-183, 189-211, 217-239, 245-267, 273-295, 301-323, 329-351, 357-379, and 385-407; these read FICE…QRIH, FECS…QRIH, YQCE…QRIH, YYCT…QRIH, YECN…QKIH, YECN…QRIH, YSCK…QRIH, FDCV…LRIH, and YVCD…QRIH. The C2H2-type 10; atypical zinc-finger motif lies at 413 to 433; sequence YECSKYEKAFGTSSQLGHLEH.

This sequence belongs to the krueppel C2H2-type zinc-finger protein family.

It localises to the nucleus. Its function is as follows. May be involved in transcriptional regulation. The chain is Zinc finger protein 19 (ZNF19) from Homo sapiens (Human).